A 298-amino-acid polypeptide reads, in one-letter code: RNA exonuclease 4 (298 aa).

Positions Met-1–Thr-73 form a coiled coil. Residues Phe-125–Tyr-275 enclose the Exonuclease domain.

The protein belongs to the REXO4 family.

It is found in the nucleus. This is RNA exonuclease 4 (rexo4) from Dictyostelium discoideum (Social amoeba).